The following is a 236-amino-acid chain: 2,3,4,5-tetrahydropyridine-2,6-dicarboxylate N-acetyltransferase (236 aa).

This sequence belongs to the transferase hexapeptide repeat family. DapH subfamily.

The enzyme catalyses (S)-2,3,4,5-tetrahydrodipicolinate + acetyl-CoA + H2O = L-2-acetamido-6-oxoheptanedioate + CoA. The protein operates within amino-acid biosynthesis; L-lysine biosynthesis via DAP pathway; LL-2,6-diaminopimelate from (S)-tetrahydrodipicolinate (acetylase route): step 1/3. Its function is as follows. Catalyzes the transfer of an acetyl group from acetyl-CoA to tetrahydrodipicolinate. In Geobacillus thermodenitrificans (strain NG80-2), this protein is 2,3,4,5-tetrahydropyridine-2,6-dicarboxylate N-acetyltransferase.